A 504-amino-acid chain; its full sequence is uncharacterized protein (504 aa).

2 disordered regions span residues 1–59 (MSSS…KNEY) and 171–255 (GVNS…NQRL). Composition is skewed to basic and acidic residues over residues 36 to 50 (KPID…KEIG) and 199 to 212 (RAET…ESRQ). The segment covering 213–232 (SNRGNNDNGDQRMTSKATTR) has biased composition (polar residues).

This is an uncharacterized protein from Caenorhabditis elegans.